A 636-amino-acid polypeptide reads, in one-letter code: Chaperone protein DnaK2 (636 aa).

The residue at position 198 (T198) is a Phosphothreonine; by autocatalysis. Positions 604–618 (EAGVGAPGAGPEAGT) are enriched in low complexity. Residues 604–636 (EAGVGAPGAGPEAGTSSGGGDDVIDAEFSEPEK) are disordered. Residues 625-636 (DVIDAEFSEPEK) are compositionally biased toward acidic residues.

The protein belongs to the heat shock protein 70 family.

Its function is as follows. Acts as a chaperone. This Synechocystis sp. (strain ATCC 27184 / PCC 6803 / Kazusa) protein is Chaperone protein DnaK2 (dnaK2).